A 209-amino-acid chain; its full sequence is MKRLVTGLLALSLFLAACGQDSDQQKDSNKEKDDKAKTEQQDEKTNDSSKDKKDKKDDSKDVNKDNKDNSANDNQQQSNSNATNNDQNQTNNNQSSNNQANNNQKSSYVAPYYGQNAAPVVRQIYPFNGNKTQALQQLPNFQTALNSANNEANKFGSNNKVYNDYSIEEHNGNYKYVFSFKDPNANGKYSIVTVDYTGQAMVTDPNYQQ.

The N-terminal stretch at 1–17 (MKRLVTGLLALSLFLAA) is a signal peptide. Residues 17–105 (ACGQDSDQQK…SNNQANNNQK (89 aa)) are disordered. Residue cysteine 18 is the site of N-palmitoyl cysteine attachment. Residue cysteine 18 is the site of S-diacylglycerol cysteine attachment. Basic and acidic residues predominate over residues 23-70 (DQQKDSNKEKDDKAKTEQQDEKTNDSSKDKKDKKDDSKDVNKDNKDNS). Low complexity predominate over residues 71–105 (ANDNQQQSNSNATNNDQNQTNNNQSSNNQANNNQK).

The protein resides in the cell membrane. This is an uncharacterized protein from Staphylococcus aureus (strain bovine RF122 / ET3-1).